We begin with the raw amino-acid sequence, 580 residues long: Proline--tRNA ligase (580 aa).

This sequence belongs to the class-II aminoacyl-tRNA synthetase family. ProS type 1 subfamily. Homodimer.

It is found in the cytoplasm. It carries out the reaction tRNA(Pro) + L-proline + ATP = L-prolyl-tRNA(Pro) + AMP + diphosphate. Functionally, catalyzes the attachment of proline to tRNA(Pro) in a two-step reaction: proline is first activated by ATP to form Pro-AMP and then transferred to the acceptor end of tRNA(Pro). As ProRS can inadvertently accommodate and process non-cognate amino acids such as alanine and cysteine, to avoid such errors it has two additional distinct editing activities against alanine. One activity is designated as 'pretransfer' editing and involves the tRNA(Pro)-independent hydrolysis of activated Ala-AMP. The other activity is designated 'posttransfer' editing and involves deacylation of mischarged Ala-tRNA(Pro). The misacylated Cys-tRNA(Pro) is not edited by ProRS. The protein is Proline--tRNA ligase of Albidiferax ferrireducens (strain ATCC BAA-621 / DSM 15236 / T118) (Rhodoferax ferrireducens).